The chain runs to 194 residues: Imidazoleglycerol-phosphate dehydratase (194 aa).

The protein belongs to the imidazoleglycerol-phosphate dehydratase family.

Its subcellular location is the cytoplasm. It carries out the reaction D-erythro-1-(imidazol-4-yl)glycerol 3-phosphate = 3-(imidazol-4-yl)-2-oxopropyl phosphate + H2O. It functions in the pathway amino-acid biosynthesis; L-histidine biosynthesis; L-histidine from 5-phospho-alpha-D-ribose 1-diphosphate: step 6/9. The chain is Imidazoleglycerol-phosphate dehydratase from Listeria monocytogenes serotype 4b (strain F2365).